The following is a 201-amino-acid chain: NAD(P)H dehydrogenase (quinone) (201 aa).

Residues 4 to 191 (VLVLYYSMYG…KIAKCQGVHV (188 aa)) enclose the Flavodoxin-like domain. Residues 10–15 (SMYGHV) and 79–81 (TRF) each bind FMN. Position 12 (Tyr-12) interacts with NAD(+). Trp-99 is a substrate binding site. FMN-binding positions include 114–120 (STGTQHG) and His-135.

This sequence belongs to the WrbA family. It depends on FMN as a cofactor.

It carries out the reaction a quinone + NADH + H(+) = a quinol + NAD(+). It catalyses the reaction a quinone + NADPH + H(+) = a quinol + NADP(+). This is NAD(P)H dehydrogenase (quinone) from Hydrogenovibrio crunogenus (strain DSM 25203 / XCL-2) (Thiomicrospira crunogena).